A 54-amino-acid polypeptide reads, in one-letter code: Ferredoxin (54 aa).

2 consecutive 4Fe-4S ferredoxin-type domains span residues 2-28 and 29-54; these read HVIS…EGET and KYVV…ISAE. Residues Cys-8, Cys-11, Cys-14, Cys-18, Cys-36, Cys-39, Cys-42, and Cys-46 each coordinate [4Fe-4S] cluster.

Requires [4Fe-4S] cluster as cofactor.

In terms of biological role, ferredoxins are iron-sulfur proteins that transfer electrons in a wide variety of metabolic reactions. The sequence is that of Ferredoxin from Megasphaera elsdenii.